The following is a 138-amino-acid chain: MEKTLSIIKPDAVERNLIGNIVKRFEDAGIKIVAMKLLKLSKAQAEAFYAVHKERPFYGELTDYMSSGPCVPMILEGEGVILKNREIMGATDPKEAAAGTIRADLAIDKEKNSVHGSDAPETAAQEIAFFFTEYELAG.

ATP is bound by residues lysine 9, phenylalanine 57, arginine 85, threonine 91, arginine 102, and asparagine 112. Catalysis depends on histidine 115, which acts as the Pros-phosphohistidine intermediate.

It belongs to the NDK family. As to quaternary structure, homotetramer. The cofactor is Mg(2+).

It localises to the cytoplasm. The enzyme catalyses a 2'-deoxyribonucleoside 5'-diphosphate + ATP = a 2'-deoxyribonucleoside 5'-triphosphate + ADP. It carries out the reaction a ribonucleoside 5'-diphosphate + ATP = a ribonucleoside 5'-triphosphate + ADP. Major role in the synthesis of nucleoside triphosphates other than ATP. The ATP gamma phosphate is transferred to the NDP beta phosphate via a ping-pong mechanism, using a phosphorylated active-site intermediate. This is Nucleoside diphosphate kinase from Desulfatibacillum aliphaticivorans.